A 620-amino-acid polypeptide reads, in one-letter code: Chaperone protein HscA homolog (620 aa).

Belongs to the heat shock protein 70 family.

Chaperone involved in the maturation of iron-sulfur cluster-containing proteins. Has a low intrinsic ATPase activity which is markedly stimulated by HscB. This Shewanella baltica (strain OS195) protein is Chaperone protein HscA homolog.